The sequence spans 263 residues: MTTYAQDSKLRLKTKIGADGRCVIEDNFFTPPFKLMAPFYPKDDLAEIMLLAVSPGLMKGDAQDMQLNIGQNCKLRITSQSFEKIHNTEDGFAGRDMHIVVGENAFLDFAPFPLIPFENAHFKGNTTISLHSSSQLLYSEIIVAGRVARNELFQFNRLHTKISILQDNKPIYYDNTILDPKTTDMTNMCMFDGYTHYLNLVLINCPLELFGARELIEEAEVDGAVSEIASSHLCLKALAKGSEPLLALREKIARLVTQKIQKD.

It belongs to the UreD family. In terms of assembly, ureH, UreF and UreG form a complex that acts as a GTP-hydrolysis-dependent molecular chaperone, activating the urease apoprotein by helping to assemble the nickel containing metallocenter of UreC. The UreE protein probably delivers the nickel.

It localises to the cytoplasm. Its function is as follows. Required for maturation of urease via the functional incorporation of the urease nickel metallocenter. This Helicobacter acinonychis (strain Sheeba) protein is Urease accessory protein UreH.